Consider the following 867-residue polypeptide: Pentatricopeptide repeat-containing protein At2g39230, mitochondrial (867 aa).

The transit peptide at 1-49 (MTTFMVSKRFRPPIFLHRFINPKPISSQTRFLHPPDNQSRDISDSTTET) directs the protein to the mitochondrion. The tract at residues 27-74 (SQTRFLHPPDNQSRDISDSTTETISTLEFPHKTSVPNHSPLTSTSETE) is disordered. The span at 60–72 (SVPNHSPLTSTSE) shows a compositional bias: polar residues. PPR repeat units lie at residues 168 to 202 (TPRAFNYLLNAYIRNKRMDYAVDCFGLMVDRKVVP), 203 to 237 (FVPYVNNVLSSLVRSNLIDEAKEIYNKMVLIGVAG), 238 to 272 (DNVTTQLLMRASLRERKPEEAVKIFRRVMSRGAEP), 273 to 307 (DGLLFSLAVQAACKTPDLVMALDLLREMRGKLGVP), 309 to 343 (SQETYTSVIVAFVKEGNMEEAVRVMDEMVGFGIPM), 344 to 378 (SVIAATSLVNGYCKGNELGKALDLFNRMEEEGLAP), 379 to 413 (DKVMFSVMVEWFCKNMEMEKAIEFYMRMKSVRIAP), 414 to 444 (SSVLVHTMIQGCLKAESPEAALEIFNDSFES), 448 to 482 (HGFMCNKIFLLFCKQGKVDAATSFLKMMEQKGIEP), 483 to 517 (NVVFYNNMMLAHCRMKNMDLARSIFSEMLEKGLEP), 518 to 552 (NNFTYSILIDGFFKNKDEQNAWDVINQMNASNFEA), 553 to 588 (NEVIYNTIINGLCKVGQTSKAKEMLQNLIKEKRYSM), 589 to 623 (SCTSYNSIIDGFVKVGDTDSAVETYREMSENGKSP), 624 to 658 (NVVTFTSLINGFCKSNRMDLALEMTHEMKSMELKL), 659 to 693 (DLPAYGALIDGFCKKNDMKTAYTLFSELPELGLMP), 694 to 728 (NVSVYNSLISGFRNLGKMDAAIDLYKKMVNDGISC), 729 to 763 (DLFTYTTMIDGLLKDGNINLASDLYSELLDLGIVP), 764 to 798 (DEILHMVLVNGLSKKGQFLKASKMLEEMKKKDVTP), and 799 to 833 (NVLLYSTVIAGHHREGNLNEAFRLHDEMLEKGIVH).

The protein belongs to the PPR family. P subfamily. As to expression, expressed in lateral organ junctions and shoot apical meristem (SAM).

The protein localises to the mitochondrion. Functionally, involved in lateral organ development and boundary demarcation. This is Pentatricopeptide repeat-containing protein At2g39230, mitochondrial (LOJ) from Arabidopsis thaliana (Mouse-ear cress).